A 208-amino-acid polypeptide reads, in one-letter code: Outer-membrane lipoprotein carrier protein (208 aa).

A signal peptide spans 1 to 22 (MRKTLTALMLSLPLLTPHMAFA).

The protein belongs to the LolA family. As to quaternary structure, monomer.

Its subcellular location is the periplasm. Functionally, participates in the translocation of lipoproteins from the inner membrane to the outer membrane. Only forms a complex with a lipoprotein if the residue after the N-terminal Cys is not an aspartate (The Asp acts as a targeting signal to indicate that the lipoprotein should stay in the inner membrane). The sequence is that of Outer-membrane lipoprotein carrier protein from Shewanella woodyi (strain ATCC 51908 / MS32).